Consider the following 258-residue polypeptide: Gamma carbonic anhydrase 3, mitochondrial (258 aa).

The transit peptide at 1 to 43 (MGTMGKAFYSVGFWIRETGQALDRLGCRLQGKNHFREQLSRHR) directs the protein to the mitochondrion. Substrate contacts are provided by residues 86-88 (RGD) and 101-102 (QD). Zn(2+) contacts are provided by histidine 107, histidine 130, and histidine 135. Position 209 (asparagine 209) interacts with substrate.

The protein belongs to the gamma-class carbonic anhydrase family. As to quaternary structure, homotrimer. Component of the oxidoreductase respiratory chain complex I; element of the extra matrix-exposed domain, which is attached to the membrane arm of this complex. Requires Zn(2+) as cofactor.

The protein resides in the mitochondrion membrane. Functionally, enzyme involved in the catabolism of H(2)CO(3) but that does not mediates the reversible hydration of carbon dioxide. Mediates complex I assembly in mitochondria and respiration. This is Gamma carbonic anhydrase 3, mitochondrial (GAMMACA3) from Arabidopsis thaliana (Mouse-ear cress).